We begin with the raw amino-acid sequence, 313 residues long: Ribosomal RNA small subunit methyltransferase H (313 aa).

S-adenosyl-L-methionine contacts are provided by residues 35–37 (GGH), Asp-55, Phe-81, Asp-103, and Gln-110.

This sequence belongs to the methyltransferase superfamily. RsmH family.

The protein resides in the cytoplasm. The catalysed reaction is cytidine(1402) in 16S rRNA + S-adenosyl-L-methionine = N(4)-methylcytidine(1402) in 16S rRNA + S-adenosyl-L-homocysteine + H(+). Functionally, specifically methylates the N4 position of cytidine in position 1402 (C1402) of 16S rRNA. The polypeptide is Ribosomal RNA small subunit methyltransferase H (Pseudomonas aeruginosa (strain UCBPP-PA14)).